The sequence spans 284 residues: Ribosomal RNA small subunit methyltransferase A (284 aa).

Residues Asn27, Leu29, Gly54, Glu75, Asp100, and Asn125 each coordinate S-adenosyl-L-methionine.

Belongs to the class I-like SAM-binding methyltransferase superfamily. rRNA adenine N(6)-methyltransferase family. RsmA subfamily.

Its subcellular location is the cytoplasm. The catalysed reaction is adenosine(1518)/adenosine(1519) in 16S rRNA + 4 S-adenosyl-L-methionine = N(6)-dimethyladenosine(1518)/N(6)-dimethyladenosine(1519) in 16S rRNA + 4 S-adenosyl-L-homocysteine + 4 H(+). Functionally, specifically dimethylates two adjacent adenosines (A1518 and A1519) in the loop of a conserved hairpin near the 3'-end of 16S rRNA in the 30S particle. May play a critical role in biogenesis of 30S subunits. In Protochlamydia amoebophila (strain UWE25), this protein is Ribosomal RNA small subunit methyltransferase A.